The following is a 356-amino-acid chain: Golgi-resident adenosine 3',5'-bisphosphate 3'-phosphatase (356 aa).

M1 is modified (N-acetylmethionine). The Cytoplasmic portion of the chain corresponds to 1 to 12 (MAPMGIRLSPLG). Residues 13-33 (VAVFFLLGLGVLYHLYSGFLA) traverse the membrane as a helical segment. Topologically, residues 34-356 (GRFSLFGLGG…KLPDLEKSGH (323 aa)) are lumenal. Residues 82–104 (VRESNVLHEKSKGKTREGAEDKM) are disordered. The active-site Proton acceptor is D108. Positions 131, 172, 174, and 175 each coordinate Mg(2+). The Proton acceptor role is filled by T177. 2 residues coordinate AMP: S240 and H243. N257 is a glycosylation site (N-linked (GlcNAc...) asparagine). G266 and K270 together coordinate AMP. D298 is a Mg(2+) binding site.

Belongs to the inositol monophosphatase superfamily. Mg(2+) serves as cofactor. Post-translationally, contains N-linked glycan resistant to endoglycosydase H.

It is found in the golgi apparatus. Its subcellular location is the trans-Golgi network membrane. The enzyme catalyses adenosine 3',5'-bisphosphate + H2O = AMP + phosphate. It participates in sulfur metabolism. Strongly inhibited by lithium. Exhibits 3'-nucleotidase activity toward adenosine 3',5'-bisphosphate (PAP), namely hydrolyzes adenosine 3',5'-bisphosphate into adenosine 5'-monophosphate (AMP) and a phosphate. May play a role in the formation of skeletal elements derived through endochondral ossification, possibly by clearing adenosine 3',5'-bisphosphate produced by Golgi sulfotransferases during glycosaminoglycan sulfation. Has no activity toward 3'-phosphoadenosine 5'-phosphosulfate (PAPS) or inositol phosphate (IP) substrates including I(1)P, I(1,4)P2, I(1,3,4)P3, I(1,4,5)P3 and I(1,3,4,5)P4. The protein is Golgi-resident adenosine 3',5'-bisphosphate 3'-phosphatase (Bpnt2) of Rattus norvegicus (Rat).